Here is a 779-residue protein sequence, read N- to C-terminus: Cell division control protein 4 (779 aa).

Residues 39–80 (AGTHRNSSTAKTVETEDGEEDIDEYQRKRAAGSGESTPERSD) are disordered. Positions 82-85 (KRVK) match the Nuclear localization signal motif. At serine 104 the chain carries Phosphoserine. Residues 272 to 319 (RDLITSLPFEISLKIFNYLQFEDIINSLGVSQNWNKIIRKSTSLWKKL) enclose the F-box domain. WD repeat units follow at residues 380–408 (HMTSVITCLQFEDNYVITGADDKMIRVYD), 420–449 (GHDGGVWALKYAHGGILVSGSTDRTVRVWD), 461–493 (GHNSTVRCLDIVEYKNIKYIVTGSRDNTLHVWK), 528–556 (GHMASVRTVSGHGNIVVSGSYDNTLIVWD), 568–598 (GHTDRIYSTIYDHERKRCISASMDTTIRIWD), 630–658 (GHTALVGLLRLSDKFLVSAAADGSIRGWD), and 669–698 (HHTNLSAITTFYVSDNILVSGSENQFNIYN).

Interacts with DCD53 and SKP1. Component of the SCF(CDC4) complex containing CDC53, SKP1, RBX1 and CDC4. CDC34. Interacts with CDC6 and CIC1. Interacts with SIC1; the interaction involves a SIC1 double phosphorylated motif (degron). Homodimerizes; the dimerization increases SIC1 ubiquitination in vitro.

The protein localises to the nucleus. It participates in protein modification; protein ubiquitination. In terms of biological role, substrate recognition component of a SCF (SKP1-CUL1-F-box protein) E3 ubiquitin-protein ligase complex which mediates the ubiquitination and subsequent proteasomal degradation of target proteins. Recognizes and binds to phosphorylated target proteins. Directs ubiquitination of the phosphorylated CDK inhibitor SIC1. Involved in the degradation of CDC6 together with CDC34/UBC3 and CDC53, and in restricting the degradation of FAR1 to the nucleus. Is essential for initiation of DNA replication and separation of the spindle pole bodies to form the poles of the mitotic spindle. It also plays a role in bud development, fusion of zygotic nuclei after conjugation and various aspects of sporulation. Required for HTA1-HTB1 locus transcription activation. Required for G1/S and G2/M transition. The protein is Cell division control protein 4 (CDC4) of Saccharomyces cerevisiae (strain ATCC 204508 / S288c) (Baker's yeast).